A 184-amino-acid polypeptide reads, in one-letter code: Probable RNA 2'-phosphotransferase (184 aa).

This sequence belongs to the KptA/TPT1 family.

Its function is as follows. Removes the 2'-phosphate from RNA via an intermediate in which the phosphate is ADP-ribosylated by NAD followed by a presumed transesterification to release the RNA and generate ADP-ribose 1''-2''-cyclic phosphate (APPR&gt;P). May function as an ADP-ribosylase. In Escherichia coli O8 (strain IAI1), this protein is Probable RNA 2'-phosphotransferase.